The following is a 638-amino-acid chain: Phosphomethylpyrimidine synthase (638 aa).

Substrate is bound by residues N236, M265, Y294, H330, 350-352 (SRG), 391-394 (DGLR), and E430. Residue H434 participates in Zn(2+) binding. Y457 provides a ligand contact to substrate. A Zn(2+)-binding site is contributed by H498. [4Fe-4S] cluster contacts are provided by C578, C581, and C586. Over residues 608–624 (AEGASQQEAEQGMQEMS) the composition is skewed to low complexity. Residues 608–633 (AEGASQQEAEQGMQEMSQKYKDAGRR) form a disordered region.

The protein belongs to the ThiC family. In terms of assembly, homodimer. [4Fe-4S] cluster is required as a cofactor.

The catalysed reaction is 5-amino-1-(5-phospho-beta-D-ribosyl)imidazole + S-adenosyl-L-methionine = 4-amino-2-methyl-5-(phosphooxymethyl)pyrimidine + CO + 5'-deoxyadenosine + formate + L-methionine + 3 H(+). The protein operates within cofactor biosynthesis; thiamine diphosphate biosynthesis. In terms of biological role, catalyzes the synthesis of the hydroxymethylpyrimidine phosphate (HMP-P) moiety of thiamine from aminoimidazole ribotide (AIR) in a radical S-adenosyl-L-methionine (SAM)-dependent reaction. The sequence is that of Phosphomethylpyrimidine synthase from Hahella chejuensis (strain KCTC 2396).